A 493-amino-acid polypeptide reads, in one-letter code: Catalase A (493 aa).

The disordered stretch occupies residues 1–24; the sequence is MKRKLTGLFGAPVSDRENSMTAGP. Residues His53 and Asn126 contribute to the active site. Tyr336 contributes to the heme binding site.

It belongs to the catalase family. In terms of assembly, homodimer. Heme serves as cofactor.

It catalyses the reaction 2 H2O2 = O2 + 2 H2O. Decomposes hydrogen peroxide into water and oxygen; serves to protect cells from the toxic effects of hydrogen peroxide. This Staphylococcus xylosus protein is Catalase A (katA).